Consider the following 1720-residue polypeptide: 182 kDa tankyrase-1-binding protein (1720 aa).

A disordered region spans residues 1-137 (MKGSTLREGT…PPLTPPARCA (137 aa)). Residue serine 14 is modified to Phosphoserine. Basic and acidic residues predominate over residues 117–127 (SGKEDAGKEDL). Phosphothreonine is present on threonine 131. Residues serine 178 and serine 220 each carry the phosphoserine modification. Disordered stretches follow at residues 185–472 (SRLT…ESNW) and 485–595 (RPSG…EDQE). The acidic stretch occupies residues 209–1563 (EEDSKSPAKG…TEILDSAMYR (1355 aa)). Basic and acidic residues predominate over residues 232–243 (QEEHSKTPEERN). Threonine 238 carries the phosphothreonine modification. The segment covering 266-287 (VSKTWVTSSADPVSEHGGSTSA) has biased composition (polar residues). A phosphoserine mark is found at serine 286 and serine 300. Low complexity predominate over residues 296 to 316 (PASESPRLSSRPSSPCHSQLS). Residues 317 to 327 (ETQSPAASEAS) show a composition bias toward polar residues. Phosphoserine occurs at positions 429 and 437. The span at 449–459 (TLPQGQGSQSA) shows a compositional bias: polar residues. 2 positions are modified to phosphoserine: serine 496 and serine 500. Residues 502–518 (ITEASEAAEAAEADSWA) are compositionally biased toward low complexity. A phosphothreonine mark is found at threonine 503 and threonine 533. Phosphoserine occurs at positions 539, 568, 602, 673, 692, and 713. 3 disordered regions span residues 659–720 (TTLP…CSEG), 734–924 (GVAT…EFEK), and 955–1081 (SGGG…GWAG). Low complexity predominate over residues 742–758 (SSFGSSSWSQDTSQNYS). Phosphoserine is present on residues serine 763, serine 796, serine 807, serine 845, serine 866, serine 871, serine 876, serine 887, serine 912, serine 976, serine 980, serine 1006, serine 1017, and serine 1022. The segment covering 840–866 (FGKRESQDPHSIHDKELQDQEFGKRDS) has biased composition (basic and acidic residues). Residues 991 to 1014 (FEKKTPVGEDRFCEASRDVGHLEE) are compositionally biased toward basic and acidic residues. Positions 1027 to 1039 (HSRDGAARPKDEG) are enriched in basic and acidic residues. Phosphoserine is present on residues serine 1047, serine 1063, serine 1084, serine 1096, serine 1126, serine 1131, serine 1171, serine 1212, serine 1241, and serine 1246. Residues 1128 to 1153 (AGLSPSRKSGGGHFVPPGETKAGAVD) form a disordered region. The tract at residues 1198–1255 (LARRLGTGESEEPRSLGVGEKDWTSSVEARNRDLPGQAEVGRHSQARESGVGEPDWSG) is disordered. Residues 1208 to 1230 (EEPRSLGVGEKDWTSSVEARNRD) are compositionally biased toward basic and acidic residues. Residue threonine 1275 is modified to Phosphothreonine. A phosphoserine mark is found at serine 1290, serine 1321, serine 1324, serine 1373, and serine 1375. The disordered stretch occupies residues 1358 to 1546 (GRVGPDLELD…RGLLPSCPSE (189 aa)). A compositionally biased stretch (polar residues) spans 1402–1411 (EDSSSPSFET). Phosphoserine is present on residues serine 1425, serine 1429, serine 1437, serine 1440, serine 1442, serine 1463, and serine 1466. The segment covering 1428-1457 (ASPSSCLTRSPPSGSQSLLEGIMTASSSKG) has biased composition (polar residues). The interval 1440–1532 (SGSQSLLEGI…QNEQASAPPP (93 aa)) is tankyrase-binding. Residues 1477–1489 (LAAGAGQGEPQEP) are compositionally biased toward low complexity. Serine 1496 carries the post-translational modification Phosphoserine. Positions 1515–1527 (WSLTGAARQNEQA) are enriched in polar residues. Serine 1549 is modified (phosphoserine). Position 1554 is a phosphothreonine (threonine 1554). The disordered stretch occupies residues 1567–1720 (NLGRKRGHRA…QALKLKKKKI (154 aa)). Basic residues predominate over residues 1568-1577 (LGRKRGHRAP). Positions 1593–1606 (SDTRLFQDSTEPRA) are enriched in basic and acidic residues. Serine 1611, serine 1612, and serine 1622 each carry phosphoserine. Residues 1620–1626 (PQSRRTR) carry the Nuclear localization signal motif. Lysine 1635 carries the post-translational modification N6-methyllysine. Phosphoserine occurs at positions 1643 and 1657. The span at 1656–1670 (RSAEEGEVTESKSSQ) shows a compositional bias: basic and acidic residues. Positions 1671–1690 (KESSVQRSKSCKVPGLGKPL) are enriched in low complexity. Serine 1706 carries the post-translational modification Phosphoserine. Positions 1714-1719 (KLKKKK) match the Nuclear localization signal motif.

Binds to the ANK repeat domain of TNKS1 and TNKS2. Post-translationally, ADP-ribosylated by TNKS1.

Its subcellular location is the nucleus. The protein localises to the cytoplasm. It localises to the cytoskeleton. It is found in the chromosome. This Mus musculus (Mouse) protein is 182 kDa tankyrase-1-binding protein (Tnks1bp1).